We begin with the raw amino-acid sequence, 120 residues long: Small ribosomal subunit protein uS19 (120 aa).

The protein belongs to the universal ribosomal protein uS19 family.

The sequence is that of Small ribosomal subunit protein uS19 (RPS15) from Naegleria gruberi (Amoeba).